The sequence spans 563 residues: Arginine--tRNA ligase (563 aa).

The short motif at 121-131 (PNIAKPFSIGH) is the 'HIGH' region element.

It belongs to the class-I aminoacyl-tRNA synthetase family. Monomer.

It localises to the cytoplasm. It catalyses the reaction tRNA(Arg) + L-arginine + ATP = L-arginyl-tRNA(Arg) + AMP + diphosphate. This is Arginine--tRNA ligase from Streptococcus pyogenes serotype M18 (strain MGAS8232).